The chain runs to 301 residues: Probable 2-dehydro-3-deoxy-D-pentonate aldolase YjhH (301 aa).

Catalysis depends on charge relay system residues threonine 46 and tyrosine 109. The active-site Proton donor is the tyrosine 135. Lysine 164 (schiff-base intermediate with substrate) is an active-site residue.

It belongs to the DapA family.

It is found in the cytoplasm. It carries out the reaction 2-dehydro-3-deoxy-D-arabinonate = glycolaldehyde + pyruvate. Functionally, functions as a 2-dehydro-3-deoxy-D-pentonate aldolase. In Escherichia coli (strain K12), this protein is Probable 2-dehydro-3-deoxy-D-pentonate aldolase YjhH (yjhH).